Here is a 635-residue protein sequence, read N- to C-terminus: Rab11 family-interacting protein 4 (635 aa).

Residues Gly49–Cys84 enclose the EF-hand domain. Ca(2+)-binding residues include Asp62, Asn64, Arg68, and Asp73. Positions Lys82–His635 are necessary for interaction with RAB11A, subcellular location, homo- or heterooligomerization. Disordered stretches follow at residues Gly147–Pro176 and Glu216–Arg258. Residues Glu216–Asp225 are compositionally biased toward acidic residues. Positions Lys279–Tyr615 form a coiled coil. One can recognise an FIP-RBD domain in the interval Glu572–Lys634.

In terms of assembly, homodimer. Forms a complex with Rab11 (RAB11A or RAB11B) and ARF6. Interacts with RAB11A; the interaction is direct. Forms a heterooligomeric complex with RAB11FIP2, RAB11FIP3 and RAB11FIP5. Interacts with ECPAS. Strongly expressed in the developing retina. Expressed predominantly in neural tissues.

The protein resides in the recycling endosome membrane. The protein localises to the cleavage furrow. It is found in the midbody. Its subcellular location is the cytoplasmic vesicle. Its function is as follows. Acts as a regulator of endocytic traffic by participating in membrane delivery. Required for the abscission step in cytokinesis, possibly by acting as an 'address tag' delivering recycling endosome membranes to the cleavage furrow during late cytokinesis. May play a role in differentiation during retinal development, in a Rab11-independent manner. The chain is Rab11 family-interacting protein 4 (Rab11fip4) from Mus musculus (Mouse).